The chain runs to 735 residues: Catalase-peroxidase (735 aa).

Residues 1–25 (MSDSKCPVTGKSSRQVAGGGTSNRD) form a disordered region. Positions 95 to 223 (WHSAGTYRMG…LAAVQMGLIY (129 aa)) form a cross-link, tryptophyl-tyrosyl-methioninium (Trp-Tyr) (with M-249). The active-site Proton acceptor is His96. Residues 223-249 (YINPEGPDGNPDPVASGRDVRETFARM) constitute a cross-link (tryptophyl-tyrosyl-methioninium (Tyr-Met) (with W-95)). Residue His264 coordinates heme b.

Belongs to the peroxidase family. Peroxidase/catalase subfamily. As to quaternary structure, homodimer or homotetramer. Heme b is required as a cofactor. Formation of the three residue Trp-Tyr-Met cross-link is important for the catalase, but not the peroxidase activity of the enzyme.

It carries out the reaction H2O2 + AH2 = A + 2 H2O. It catalyses the reaction 2 H2O2 = O2 + 2 H2O. Bifunctional enzyme with both catalase and broad-spectrum peroxidase activity. The polypeptide is Catalase-peroxidase (Trichlorobacter lovleyi (strain ATCC BAA-1151 / DSM 17278 / SZ) (Geobacter lovleyi)).